Reading from the N-terminus, the 128-residue chain is Sulfurtransferase TusD (128 aa).

C78 (cysteine persulfide intermediate) is an active-site residue.

This sequence belongs to the DsrE/TusD family. In terms of assembly, heterohexamer, formed by a dimer of trimers. The hexameric TusBCD complex contains 2 copies each of TusB, TusC and TusD. The TusBCD complex interacts with TusE.

The protein localises to the cytoplasm. Part of a sulfur-relay system required for 2-thiolation of 5-methylaminomethyl-2-thiouridine (mnm(5)s(2)U) at tRNA wobble positions. Accepts sulfur from TusA and transfers it in turn to TusE. This chain is Sulfurtransferase TusD, found in Cronobacter sakazakii (strain ATCC BAA-894) (Enterobacter sakazakii).